A 493-amino-acid chain; its full sequence is Galactose-1-phosphate uridylyltransferase 2 (493 aa).

This sequence belongs to the galactose-1-phosphate uridylyltransferase type 2 family.

Its subcellular location is the cytoplasm. It catalyses the reaction alpha-D-galactose 1-phosphate + UDP-alpha-D-glucose = alpha-D-glucose 1-phosphate + UDP-alpha-D-galactose. It participates in carbohydrate metabolism; galactose metabolism. This chain is Galactose-1-phosphate uridylyltransferase 2 (galT2), found in Streptococcus pneumoniae (strain ATCC BAA-255 / R6).